Here is a 315-residue protein sequence, read N- to C-terminus: Glutathione synthetase (315 aa).

In terms of domain architecture, ATP-grasp spans 125–310 (KLFTAWFSEF…ITGMLFDAIE (186 aa)). 151–207 (HQAKGDIILKPLDGMGGTSIFRVKQDDPNLGVIIETLTQYGNQYAMAQAFIPEITKG) provides a ligand contact to ATP. Mg(2+) is bound by residues Glu-281 and Asn-283.

Belongs to the prokaryotic GSH synthase family. The cofactor is Mg(2+). Mn(2+) serves as cofactor.

It catalyses the reaction gamma-L-glutamyl-L-cysteine + glycine + ATP = glutathione + ADP + phosphate + H(+). Its pathway is sulfur metabolism; glutathione biosynthesis; glutathione from L-cysteine and L-glutamate: step 2/2. The protein is Glutathione synthetase of Shewanella oneidensis (strain ATCC 700550 / JCM 31522 / CIP 106686 / LMG 19005 / NCIMB 14063 / MR-1).